Here is an 84-residue protein sequence, read N- to C-terminus: Small ribosomal subunit protein bS20 (84 aa).

Belongs to the bacterial ribosomal protein bS20 family.

In terms of biological role, binds directly to 16S ribosomal RNA. The sequence is that of Small ribosomal subunit protein bS20 from Limosilactobacillus fermentum (strain NBRC 3956 / LMG 18251) (Lactobacillus fermentum).